The following is a 1507-amino-acid chain: Protein TIC 214 (1507 aa).

6 helical membrane passes run 4–24 (IYLV…LPIG), 53–73 (TILL…VLAL), 81–101 (LWVK…IYLY), 129–149 (AFLE…NPVF), 163–183 (ISTF…IFFL), and 202–222 (LVKI…SFLC).

This sequence belongs to the TIC214 family. Part of the Tic complex.

It localises to the plastid. The protein resides in the chloroplast inner membrane. Functionally, involved in protein precursor import into chloroplasts. May be part of an intermediate translocation complex acting as a protein-conducting channel at the inner envelope. This is Protein TIC 214 from Staurastrum punctulatum (Green alga).